The sequence spans 85 residues: Antifungal protein (85 aa).

Positions 1–18 (MVKLFVIVILALIAVAFG) are cleaved as a signal peptide. Tandem repeats lie at residues 19–25 (QHGHGGQ) and 67–73 (QHGHGGQ). Residues 19-73 (QHGHGGQDQHGYGHGQQAVYGKGHEGHGVNNLGQDGHGQHGYAHGHSDQHGHGGQ) are 2 X 7 AA repeats of Q-H-G-H-G-G-Q. Gly residues predominate over residues 22-32 (HGGQDQHGYGH). The interval 22-85 (HGGQDQHGYG…QHDGYKNRGY (64 aa)) is disordered. Over residues 63 to 85 (GHSDQHGHGGQHGQHDGYKNRGY) the composition is skewed to basic and acidic residues.

Homodimer. Post-translationally, the N-terminus is blocked. Hemolymph.

This protein inhibits the growth of a variety of fungal species. The antifungal activity of this protein is enhanced by the presence of sarcotoxin IA. The protein is Antifungal protein of Sarcophaga peregrina (Flesh fly).